The following is a 205-amino-acid chain: Mitotic spindle assembly checkpoint protein MAD2A (205 aa).

Position 2 is an N-acetylalanine (Ala2). Residues Ser6, Ser130, Ser170, Ser178, Ser185, and Ser195 each carry the phosphoserine modification. The HORMA domain occupies Arg14–Val197. Positions Ser195–Asp205 are required for assuming the closed conformation and for interaction with CDC20.

Belongs to the MAD2 family. Monomer and homodimer. Heterodimerizes with MAD2L1 in order to form a tetrameric MAD1L1-MAD2L1 core complex. In the closed and open conformation, interacts with MAD1L1. Formation of a heterotetrameric core complex containing two molecules each of MAD1L1 and of MAD2L1 promotes binding of another molecule of MAD2L1 to each MAD2L1, resulting in a heterohexamer. Interacts with MAD2L1BP. Interacts with ADAM17/TACE. Interacts with CDC20. Dimeric MAD2L1 in the closed conformation interacts with CDC20. Monomeric MAD2L1 in the open conformation does not interact with CDC20. CDC20 competes with MAD1L1 for MAD2L1 binding. In the closed conformation, interacts with BUB1B. Interacts with TTK. Interacts with TPR. Binds to UBD (via ubiquitin-like 1 domain) during mitosis. Interacts with isoform 1 and isoform 2 of NEK2. Interacts with HSF1; this interaction occurs in mitosis. Interacts with isoform 3 of MAD1L1; this interaction leads to the cytoplasmic sequestration of MAD2L1. Phosphorylated on multiple serine residues. The level of phosphorylation varies during the cell cycle and is highest during mitosis. Phosphorylation abolishes interaction with MAD1L1 and reduces interaction with CDC20. Phosphorylated by NEK2.

The protein resides in the nucleus. It is found in the chromosome. Its subcellular location is the centromere. It localises to the kinetochore. The protein localises to the cytoplasm. The protein resides in the cytoskeleton. It is found in the spindle pole. Its function is as follows. Component of the spindle-assembly checkpoint that prevents the onset of anaphase until all chromosomes are properly aligned at the metaphase plate. In the closed conformation (C-MAD2) forms a heterotetrameric complex with MAD1L1 at unattached kinetochores during prometaphase, the complex recruits open conformation molecules of MAD2L1 (O-MAD2) and then promotes the conversion of O-MAD2 to C-MAD2. Required for the execution of the mitotic checkpoint which monitors the process of kinetochore-spindle attachment and inhibits the activity of the anaphase promoting complex by sequestering CDC20 until all chromosomes are aligned at the metaphase plate. This is Mitotic spindle assembly checkpoint protein MAD2A (MAD2L1) from Homo sapiens (Human).